The primary structure comprises 670 residues: MKPIAIQPASLTFNNEGTPVSRDFDDVYFSNDDGLEETRYVFLDGNQLPERFMTHPRDSFIVAESGFGTGLNFLTLWQAFAAFRDAHPDATLQRLHFISFEKFPLTPADLKSAHAHWPELAPWAQQLQAQWPMALPGCQRLVLDGGRVTLDLWLGDINELVDTLDDTHNRQVDAWFLDGFAPSKNPEMWTPGLFTAMARLARPGGTLATFTSAGFVRRGLIEAGFDVVKRKGFGRKREMLTGALSHDAPPPARAPWYARRPASGDKDVAVVGGGIASALLALGLLRRGWQVTLYCEDDAPAQGASGNRQGALYPLLSHHDAALAAFFPAAFTFARRLYDALPVSFDKDWCGVTQLGWDEKSQTKINQMLDLALPDTLAHGVDAREVRERCGVKTGCGGIEYPQGGWLCPAQLTAGVLELAQAHGLRVHYGHRVSALHREDLDWQLDFANGAQARHAAVVLANGHQLSGFPQTEKLPVYPVGGQVSHIPTTPGLGALRQVLCYDGYLTPQNPANAMHCIGASYHRGVSEMRYQEEDQQRNRQRLIDCLPAASWAQEVDVSAGDARCGVRCATRDHLPMVGNAPDYAATLRDYATLSQDASAPETVMPAPVLKNLFVLGALGSRGLCSAPLAAEILASQMSGEPLPLDGATLAALNPNRLWVRKLLKGRAAS.

The interval 1-245 (MKPIAIQPAS…KREMLTGALS (245 aa)) is tRNA (mnm(5)s(2)U34)-methyltransferase. The FAD-dependent cmnm(5)s(2)U34 oxidoreductase stretch occupies residues 271–670 (VGGGIASALL…RKLLKGRAAS (400 aa)).

This sequence in the N-terminal section; belongs to the methyltransferase superfamily. tRNA (mnm(5)s(2)U34)-methyltransferase family. It in the C-terminal section; belongs to the DAO family. Requires FAD as cofactor.

Its subcellular location is the cytoplasm. It carries out the reaction 5-aminomethyl-2-thiouridine(34) in tRNA + S-adenosyl-L-methionine = 5-methylaminomethyl-2-thiouridine(34) in tRNA + S-adenosyl-L-homocysteine + H(+). Its function is as follows. Catalyzes the last two steps in the biosynthesis of 5-methylaminomethyl-2-thiouridine (mnm(5)s(2)U) at the wobble position (U34) in tRNA. Catalyzes the FAD-dependent demodification of cmnm(5)s(2)U34 to nm(5)s(2)U34, followed by the transfer of a methyl group from S-adenosyl-L-methionine to nm(5)s(2)U34, to form mnm(5)s(2)U34. The protein is tRNA 5-methylaminomethyl-2-thiouridine biosynthesis bifunctional protein MnmC of Cronobacter sakazakii (strain ATCC BAA-894) (Enterobacter sakazakii).